Consider the following 135-residue polypeptide: Nucleoside diphosphate kinase (135 aa).

ATP contacts are provided by Lys10, Phe58, Arg86, Thr92, Arg103, and Asn113. The active-site Pros-phosphohistidine intermediate is the His116.

It belongs to the NDK family. As to quaternary structure, homotetramer. Mg(2+) is required as a cofactor.

The protein resides in the cytoplasm. It catalyses the reaction a 2'-deoxyribonucleoside 5'-diphosphate + ATP = a 2'-deoxyribonucleoside 5'-triphosphate + ADP. It carries out the reaction a ribonucleoside 5'-diphosphate + ATP = a ribonucleoside 5'-triphosphate + ADP. In terms of biological role, major role in the synthesis of nucleoside triphosphates other than ATP. The ATP gamma phosphate is transferred to the NDP beta phosphate via a ping-pong mechanism, using a phosphorylated active-site intermediate. This Nocardioides sp. (strain ATCC BAA-499 / JS614) protein is Nucleoside diphosphate kinase.